The following is a 93-amino-acid chain: Early E3A 10.5 kDa glycoprotein (93 aa).

A glycan (N-linked (GlcNAc...) asparagine; by host) is linked at asparagine 3. Residues 34-55 (MWWFSIALMFVCLIIMWLICCL) form a helical membrane-spanning segment.

This sequence belongs to the adenoviridae E3A-1 family. In terms of processing, N-glycosylated and probably also O-glycosylated.

The protein resides in the host nucleus membrane. The sequence is that of Early E3A 10.5 kDa glycoprotein from Homo sapiens (Human).